Reading from the N-terminus, the 573-residue chain is Proline--tRNA ligase (573 aa).

Belongs to the class-II aminoacyl-tRNA synthetase family. ProS type 1 subfamily. In terms of assembly, homodimer.

It localises to the cytoplasm. It catalyses the reaction tRNA(Pro) + L-proline + ATP = L-prolyl-tRNA(Pro) + AMP + diphosphate. Its function is as follows. Catalyzes the attachment of proline to tRNA(Pro) in a two-step reaction: proline is first activated by ATP to form Pro-AMP and then transferred to the acceptor end of tRNA(Pro). As ProRS can inadvertently accommodate and process non-cognate amino acids such as alanine and cysteine, to avoid such errors it has two additional distinct editing activities against alanine. One activity is designated as 'pretransfer' editing and involves the tRNA(Pro)-independent hydrolysis of activated Ala-AMP. The other activity is designated 'posttransfer' editing and involves deacylation of mischarged Ala-tRNA(Pro). The misacylated Cys-tRNA(Pro) is not edited by ProRS. The sequence is that of Proline--tRNA ligase from Caldanaerobacter subterraneus subsp. tengcongensis (strain DSM 15242 / JCM 11007 / NBRC 100824 / MB4) (Thermoanaerobacter tengcongensis).